A 452-amino-acid polypeptide reads, in one-letter code: Keratin, type II cytoskeletal 80 (452 aa).

Residues 1–82 (MAYRSCVVGF…DPAVQQQKNQ (82 aa)) are head. At S45 the chain carries Phosphoserine. The tract at residues 82–118 (QEKEEMKVLNDKFASLIGKVQALEQRNQLLETRWGFL) is coil 1A. In terms of domain architecture, IF rod spans 83–394 (EKEEMKVLND…KLMEGEESRM (312 aa)). The tract at residues 119–135 (QGQGSATFDLSHHYETF) is linker 1. The coil 1B stretch occupies residues 136-227 (QGRLQEELRK…TVYEQELKDL (92 aa)). The segment at 228 to 251 (TAQVKDVSVTVGLDSRCHIDLSGI) is linker 12. The segment at 252–390 (VEEVKAQYDA…ATYHKLMEGE (139 aa)) is coil 2. The segment at 391–452 (ESRMDLPSTT…YLSQESEASE (62 aa)) is tail. 2 stretches are compositionally biased toward polar residues: residues 411–421 (TTASKSGLSKT) and 443–452 (YLSQESEASE). The tract at residues 411-452 (TTASKSGLSKTPSRKKKNRGGPVIKITEMSEKYLSQESEASE) is disordered.

The protein belongs to the intermediate filament family. In terms of assembly, heterotetramer of two type I and two type II keratins.

The polypeptide is Keratin, type II cytoskeletal 80 (Krt80) (Rattus norvegicus (Rat)).